The sequence spans 242 residues: MGHKINPTGLRLGITQEHRSRWYASSKSYPALLQEDDRIRKFIHKKYGSAGISDVLIARKADQLEVELKTARPGVLVGRQGSGIEELRSGIQKTVGDRSRQVRINVVEVERVDGDAFLLAEYIAQQLEKRVAFRRTIRMAVQRAQRAGVLGLKIQVSGRLNGAEIARTEWTREGRVPLHTLRADIDYATKVASTTYGVLGIKVWVFKGEVLGDEAPLIPVGASPRRRASRRPQQFEDRSNEG.

The KH type-2 domain maps to 39-110 (IRKFIHKKYG…QVRINVVEVE (72 aa)). The interval 221–242 (GASPRRRASRRPQQFEDRSNEG) is disordered. The segment covering 233-242 (QQFEDRSNEG) has biased composition (basic and acidic residues).

The protein belongs to the universal ribosomal protein uS3 family. As to quaternary structure, part of the 30S ribosomal subunit. Forms a tight complex with proteins S10 and S14.

Functionally, binds the lower part of the 30S subunit head. Binds mRNA in the 70S ribosome, positioning it for translation. This is Small ribosomal subunit protein uS3 from Parasynechococcus marenigrum (strain WH8102).